The following is a 237-amino-acid chain: Class B acid phosphatase (237 aa).

A signal peptide spans 1–23; it reads MRKTPLALSAVFLLLSLNQSAFA. The active-site Nucleophile is Asp-69. Mg(2+) is bound by residues Asp-69 and Asp-71. The Proton donor role is filled by Asp-71. Substrate-binding positions include 137-138 and Lys-177; that span reads TG. Asp-192 is a binding site for Mg(2+).

It belongs to the class B bacterial acid phosphatase family. As to quaternary structure, homotetramer. It depends on Mg(2+) as a cofactor.

The protein resides in the periplasm. It catalyses the reaction a phosphate monoester + H2O = an alcohol + phosphate. Its function is as follows. Dephosphorylates several organic phosphate monoesters. Also has a phosphotransferase activity catalyzing the transfer of low-energy phosphate groups from organic phosphate monoesters to free hydroxyl groups of various organic compounds. The polypeptide is Class B acid phosphatase (Rahnella sp. (strain Y9602)).